The chain runs to 283 residues: Stage II sporulation protein Q (283 aa).

Residues 22 to 42 form a helical membrane-spanning segment; that stretch reads WVFPAIYLVSAAVILTAVLWY. Positions 228–283 are disordered; it reads EKAATQETEESIQQSSEKKDGSTEKGTEEKSGEKKDDSTDKSGSKESSTTEDTEQS. Residues 243 to 271 are compositionally biased toward basic and acidic residues; the sequence is SEKKDGSTEKGTEEKSGEKKDDSTDKSGS.

As to quaternary structure, interacts with SpoIIIAH and SpoIIE.

Its subcellular location is the forespore membrane. In terms of biological role, involved in forespore engulfment and required for anchoring membrane proteins on the forespore side of the septal membrane. Forms a channel with SpoIIIAH that is open on the forespore end and closed (or gated) on the mother cell end. This allows sigma-E-directed gene expression in the mother-cell compartment of the sporangium to trigger the activation of sigma-G forespore-specific gene expression by a pathway of intercellular signaling. This Bacillus subtilis (strain 168) protein is Stage II sporulation protein Q (spoIIQ).